A 139-amino-acid polypeptide reads, in one-letter code: MENKIIYFLCTGNSCRSQMAEGWAKQYLGDEWKVYSAGIEAHGLNPNAVKAMKEVGIDISNQTSDIIDSDILNNADLVVTLCGDAADKCPMTPPHVKREHWGFDDPARAQGTEEEKWAFFQRVRDEIGNRLKEFAETGK.

Active-site nucleophile residues include Cys10, Cys82, and Cys89. 2 cysteine pairs are disulfide-bonded: Cys10–Cys82 and Cys82–Cys89.

The protein belongs to the low molecular weight phosphotyrosine protein phosphatase family. Thioredoxin-coupled ArsC subfamily. In terms of assembly, monomer.

The protein localises to the cytoplasm. The enzyme catalyses arsenate + [thioredoxin]-dithiol + H(+) = arsenite + [thioredoxin]-disulfide + H2O. Activity is potassium and sulfate-independent. Its function is as follows. Catalyzes the reduction of arsenate [As(V)] to arsenite [As(III)]. In vitro, can dephosphorylate para-nitrophenyl phosphate (pNPP). This Bacillus subtilis (strain 168) protein is Arsenate reductase.